Reading from the N-terminus, the 145-residue chain is Large ribosomal subunit protein uL13 (145 aa).

This sequence belongs to the universal ribosomal protein uL13 family. As to quaternary structure, part of the 50S ribosomal subunit.

In terms of biological role, this protein is one of the early assembly proteins of the 50S ribosomal subunit, although it is not seen to bind rRNA by itself. It is important during the early stages of 50S assembly. This is Large ribosomal subunit protein uL13 from Listeria innocua serovar 6a (strain ATCC BAA-680 / CLIP 11262).